The sequence spans 393 residues: MNFQVEPPEKKKTKNSSPPHSPPSSSSPSLSLLPEEIVVHCLARISRLYYPTLSLVSKSFRSILSSTELYATRSHLGSTEQCVYLCLWDPSYQFPQWLRLLVNPNRTLANSIIKKRRKKKKTTGQMLVPLTSSKFTSVSKATVVVGSEIYVLGGPVDSAVRVLDCCSHTWRDAPSMNVSRMNAWACFHDGKIYVMGGCQGLKDEPWAEVFNTKTQTWEGLPEPGSEVRKCSIDRSGVIEGKIEFGNVNEMCAYDTKLCKWEYCVNKSAALRSECMIENVSYGFWNMRLLWYDNDIQKDYWKRLEGLESLDDKYMRNGGSSGNTTKLVACGGKLLLLWEGYMKHNPNNRKKIWCAVIAIEKCDGGGVWGIVESVDVLYTVPISCQLLHCLVVSV.

A disordered region spans residues 1-30 (MNFQVEPPEKKKTKNSSPPHSPPSSSSPSL). The 47-residue stretch at 27–73 (SPSLSLLPEEIVVHCLARISRLYYPTLSLVSKSFRSILSSTELYATR) folds into the F-box domain. Kelch repeat units follow at residues 148-190 (EIYV…FHDG), 191-237 (KIYV…RSGV), 239-272 (EGKI…ALRS), and 273-320 (ECMI…GGSS).

The sequence is that of F-box/kelch-repeat protein At4g19865 from Arabidopsis thaliana (Mouse-ear cress).